We begin with the raw amino-acid sequence, 319 residues long: Lipoyl synthase (319 aa).

A disordered region spans residues 1–32 (MVVLVDTVSSTPVRPRHPEKAARPDSLSPKKP). Basic and acidic residues predominate over residues 16–32 (RHPEKAARPDSLSPKKP). Residues Cys-61, Cys-66, Cys-72, Cys-87, Cys-91, Cys-94, and Ser-300 each contribute to the [4Fe-4S] cluster site. A Radical SAM core domain is found at 73–289 (WDKKHATFMI…GKTAYAKGFL (217 aa)).

This sequence belongs to the radical SAM superfamily. Lipoyl synthase family. [4Fe-4S] cluster serves as cofactor.

The protein resides in the cytoplasm. It catalyses the reaction [[Fe-S] cluster scaffold protein carrying a second [4Fe-4S](2+) cluster] + N(6)-octanoyl-L-lysyl-[protein] + 2 oxidized [2Fe-2S]-[ferredoxin] + 2 S-adenosyl-L-methionine + 4 H(+) = [[Fe-S] cluster scaffold protein] + N(6)-[(R)-dihydrolipoyl]-L-lysyl-[protein] + 4 Fe(3+) + 2 hydrogen sulfide + 2 5'-deoxyadenosine + 2 L-methionine + 2 reduced [2Fe-2S]-[ferredoxin]. It participates in protein modification; protein lipoylation via endogenous pathway; protein N(6)-(lipoyl)lysine from octanoyl-[acyl-carrier-protein]: step 2/2. Its function is as follows. Catalyzes the radical-mediated insertion of two sulfur atoms into the C-6 and C-8 positions of the octanoyl moiety bound to the lipoyl domains of lipoate-dependent enzymes, thereby converting the octanoylated domains into lipoylated derivatives. This chain is Lipoyl synthase, found in Rhodopseudomonas palustris (strain BisB5).